We begin with the raw amino-acid sequence, 320 residues long: Ribosome production factor 2 homolog (320 aa).

Positions 30–234 constitute a Brix domain; that stretch reads RTMLFLDGRK…IRRTKIASED (205 aa). The disordered stretch occupies residues 268-320; sequence LGKQQTGSIQTRRVKALRKTPEEKKENRQRKKVALKAAAAEALASQGNNPFSS. Over residues 302–311 the composition is skewed to low complexity; sequence LKAAAAEALA.

The protein belongs to the RPF2 family.

It localises to the nucleus. It is found in the nucleolus. Required for normal assembly of the mitotic spindle. May be involved in both centrosome-dependent and centrosome-independent spindle assembly programs. This chain is Ribosome production factor 2 homolog, found in Drosophila melanogaster (Fruit fly).